Reading from the N-terminus, the 397-residue chain is Argininosuccinate synthase (397 aa).

Residue 9–17 participates in ATP binding; the sequence is AYSGGLDTS. L-citrulline is bound at residue tyrosine 87. Glycine 117 contributes to the ATP binding site. Residues threonine 119, asparagine 123, and aspartate 124 each coordinate L-aspartate. Asparagine 123 contacts L-citrulline. L-citrulline is bound by residues arginine 127, serine 175, serine 184, glutamate 257, and tyrosine 269.

It belongs to the argininosuccinate synthase family. Type 1 subfamily. In terms of assembly, homotetramer.

Its subcellular location is the cytoplasm. It catalyses the reaction L-citrulline + L-aspartate + ATP = 2-(N(omega)-L-arginino)succinate + AMP + diphosphate + H(+). Its pathway is amino-acid biosynthesis; L-arginine biosynthesis; L-arginine from L-ornithine and carbamoyl phosphate: step 2/3. The sequence is that of Argininosuccinate synthase from Dictyoglomus turgidum (strain DSM 6724 / Z-1310).